We begin with the raw amino-acid sequence, 295 residues long: MTAAVQSPTVNTTLNYFREVADGGLSEIRHGTVGSTRMKYNTQPVVVNDIRSNEGEFSLDKQGFQLVTSATKVKAFDEKTVKEQYYEELIDLIKETTGASFVLPMNHLVRQQLWESIHEIPADADDAAIVDTTAAPAMSVHIDQTPEGAELILQMLMQADAGRLGKTRWGIINAWRPLKLIRREPLAVCDVRSVPDSDLRVLGVIYPLPDGMVYNGSSDLKSDTWNVAANPEHKWYYASNMTPDEVLLLKMYDTKLDGRARKCPHSAFKRSYDEGPARESIETRCLVFWEDQERE.

It belongs to the asaB hydroxylase/desaturase family.

It participates in secondary metabolite biosynthesis; terpenoid biosynthesis. Functionally, hydroxylase/desaturase; part of the gene cluster that mediates the biosynthesis of enfumafungin, a glycosylated fernene-type triterpenoid with potent antifungal activity, mediated by its interaction with beta-1,3-glucan synthase and the fungal cell wall. The pathway begins with the terpene cyclase-glycosyl transferase fusion protein that most likely uses 2,3-oxidosqualene as substrate and catalyzes glycosylation immediately after cyclization. The fernene glycoside then could be processed by the desaturase efuI which catalyzes isomerization of a double bond established by efuA to form the core structure. The latter would then undergo a series of hydroxylations in unknown order at C-2, C-19, C-23 and C-25, which would be catalyzed by two of the three cytochrome P450 monooxygenases efuB, efuG or efuH. The hydroxy-group at C-25 becomes oxidized by the dehydrogenase efuE to enable a spontaneous, non-enzymatic hemiacetal formation with C-23. After hydroxylation at C-2, acetylation by the acetyltransferase efuC takes place. The final steps in enfumafungin biosynthesis require expansion of the 5-membered ring by lactonization via a Baeyer-Villiger reaction mediated by one of the BGC's cytochrome P450 monooxygenases (efuB, efuG or efuH) followed by ring cleavage. This type of reaction would establish a double bond between C-20 and C-21 which could be reduced by the reductase efuL to form the final product. This is Hydroxylase/desaturase efuI from Hormonema carpetanum.